A 159-amino-acid polypeptide reads, in one-letter code: MFGFNDMVKFLWSFLIVLPLVQIIHVSGHSFMAFIFGGKGSLDIGMGKTLLKIGPIRFRTIYFIDSFCRYGELKIDNRFSNALVYAGGCLFNLITIFAINLLIIHSVLKPNVFFYQFVYFSTYYVFFALLPVRYSEKKSSDGLAIYKVLRYGERYEIDK.

3 consecutive transmembrane segments (helical) span residues 16-36 (IVLPLVQIIHVSGHSFMAFIF), 84-104 (VYAGGCLFNLITIFAINLLII), and 112-132 (VFFYQFVYFSTYYVFFALLPV).

It is found in the cell membrane. This is an uncharacterized protein from Bacillus subtilis (strain 168).